A 463-amino-acid chain; its full sequence is Cysteine--tRNA ligase (463 aa).

C27 lines the Zn(2+) pocket. The 'HIGH' region signature appears at 29-39 (ATVQGLPHIGH). Residues C205, H230, and E234 each contribute to the Zn(2+) site. Positions 261 to 265 (KMSKS) match the 'KMSKS' region motif. Position 264 (K264) interacts with ATP.

This sequence belongs to the class-I aminoacyl-tRNA synthetase family. Monomer. It depends on Zn(2+) as a cofactor.

Its subcellular location is the cytoplasm. The catalysed reaction is tRNA(Cys) + L-cysteine + ATP = L-cysteinyl-tRNA(Cys) + AMP + diphosphate. The polypeptide is Cysteine--tRNA ligase (Mycolicibacterium vanbaalenii (strain DSM 7251 / JCM 13017 / BCRC 16820 / KCTC 9966 / NRRL B-24157 / PYR-1) (Mycobacterium vanbaalenii)).